The primary structure comprises 85 residues: Putative membrane protein insertion efficiency factor (85 aa).

Belongs to the UPF0161 family.

It localises to the cell inner membrane. Functionally, could be involved in insertion of integral membrane proteins into the membrane. The polypeptide is Putative membrane protein insertion efficiency factor (Escherichia fergusonii (strain ATCC 35469 / DSM 13698 / CCUG 18766 / IAM 14443 / JCM 21226 / LMG 7866 / NBRC 102419 / NCTC 12128 / CDC 0568-73)).